Here is a 313-residue protein sequence, read N- to C-terminus: Formimidoylglutamase (313 aa).

Histidine 130, aspartate 155, histidine 157, aspartate 159, aspartate 241, and aspartate 243 together coordinate Mn(2+).

It belongs to the arginase family. It depends on Mn(2+) as a cofactor.

It carries out the reaction N-formimidoyl-L-glutamate + H2O = formamide + L-glutamate. It functions in the pathway amino-acid degradation; L-histidine degradation into L-glutamate; L-glutamate from N-formimidoyl-L-glutamate (hydrolase route): step 1/1. Its function is as follows. Catalyzes the conversion of N-formimidoyl-L-glutamate to L-glutamate and formamide. This Salmonella heidelberg (strain SL476) protein is Formimidoylglutamase.